A 131-amino-acid polypeptide reads, in one-letter code: Insertion element IS1 protein InsB (131 aa).

It belongs to the transposase 27 family.

Absolutely required for transposition of IS1. The polypeptide is Insertion element IS1 protein InsB (insB1) (Shigella flexneri).